A 397-amino-acid polypeptide reads, in one-letter code: Ribosomal RNA large subunit methyltransferase I (397 aa).

In terms of domain architecture, PUA spans 2–79 (SASIYLVKGR…KEETVDLDFF (78 aa)).

It belongs to the methyltransferase superfamily. RlmI family.

Its subcellular location is the cytoplasm. The enzyme catalyses cytidine(1962) in 23S rRNA + S-adenosyl-L-methionine = 5-methylcytidine(1962) in 23S rRNA + S-adenosyl-L-homocysteine + H(+). Functionally, specifically methylates the cytosine at position 1962 (m5C1962) of 23S rRNA. This chain is Ribosomal RNA large subunit methyltransferase I, found in Aeromonas hydrophila subsp. hydrophila (strain ATCC 7966 / DSM 30187 / BCRC 13018 / CCUG 14551 / JCM 1027 / KCTC 2358 / NCIMB 9240 / NCTC 8049).